Consider the following 132-residue polypeptide: Small ribosomal subunit protein uS8 (132 aa).

It belongs to the universal ribosomal protein uS8 family. Part of the 30S ribosomal subunit. Contacts proteins S5 and S12.

Its function is as follows. One of the primary rRNA binding proteins, it binds directly to 16S rRNA central domain where it helps coordinate assembly of the platform of the 30S subunit. The polypeptide is Small ribosomal subunit protein uS8 (Corynebacterium diphtheriae (strain ATCC 700971 / NCTC 13129 / Biotype gravis)).